A 120-amino-acid chain; its full sequence is uncharacterized protein (120 aa).

A signal peptide spans 1 to 27; sequence MPKIGVSLIVLIMLIIFLAGCNKNEQN.

This is an uncharacterized protein from Bacillus subtilis (strain 168).